Consider the following 102-residue polypeptide: Urease subunit beta (102 aa).

This sequence belongs to the urease beta subunit family. Heterotrimer of UreA (gamma), UreB (beta) and UreC (alpha) subunits. Three heterotrimers associate to form the active enzyme.

It localises to the cytoplasm. It catalyses the reaction urea + 2 H2O + H(+) = hydrogencarbonate + 2 NH4(+). Its pathway is nitrogen metabolism; urea degradation; CO(2) and NH(3) from urea (urease route): step 1/1. This is Urease subunit beta from Acinetobacter baumannii (strain ACICU).